Consider the following 536-residue polypeptide: Phosphoenolpyruvate carboxykinase (ATP) (536 aa).

Arg-62, Tyr-203, and Lys-209 together coordinate substrate. ATP is bound by residues Lys-209, His-228, and 244–252 (GLSGTGKTT). Mn(2+) contacts are provided by Lys-209 and His-228. Asp-265 lines the Mn(2+) pocket. Residues Glu-293, Arg-329, 445 to 446 (RI), and Thr-451 contribute to the ATP site. Arg-329 is a substrate binding site.

It belongs to the phosphoenolpyruvate carboxykinase (ATP) family. As to quaternary structure, monomer. The cofactor is Mn(2+).

The protein localises to the cytoplasm. It carries out the reaction oxaloacetate + ATP = phosphoenolpyruvate + ADP + CO2. It participates in carbohydrate biosynthesis; gluconeogenesis. In terms of biological role, involved in the gluconeogenesis. Catalyzes the conversion of oxaloacetate (OAA) to phosphoenolpyruvate (PEP) through direct phosphoryl transfer between the nucleoside triphosphate and OAA. The sequence is that of Phosphoenolpyruvate carboxykinase (ATP) from Actinobacillus pleuropneumoniae serotype 5b (strain L20).